A 329-amino-acid chain; its full sequence is UDP-N-acetylenolpyruvoylglucosamine reductase (329 aa).

Positions 28–192 (RVGGPADLLC…ARVEVRLHAG (165 aa)) constitute an FAD-binding PCMH-type domain. The active site involves Arg-172. The disordered stretch occupies residues 202–227 (REDRERRRATQPLDRPTFGSTFTNPP). Catalysis depends on Ser-221, which acts as the Proton donor. Glu-291 is an active-site residue. The tract at residues 307–329 (DGHAAAGGGPGAASGGVRPPEAT) is disordered. Gly residues predominate over residues 311-320 (AAGGGPGAAS).

This sequence belongs to the MurB family. FAD is required as a cofactor.

The protein localises to the cytoplasm. The catalysed reaction is UDP-N-acetyl-alpha-D-muramate + NADP(+) = UDP-N-acetyl-3-O-(1-carboxyvinyl)-alpha-D-glucosamine + NADPH + H(+). It functions in the pathway cell wall biogenesis; peptidoglycan biosynthesis. Cell wall formation. The sequence is that of UDP-N-acetylenolpyruvoylglucosamine reductase from Anaeromyxobacter sp. (strain K).